The primary structure comprises 533 residues: Nitrogen fixation protein AnfA (533 aa).

The tract at residues 33-193 (ILYKISQIIT…PLVELYLIEN (161 aa)) is a domain. Positions 46–186 (DLADALSIVL…MIATMIAPLV (141 aa)) constitute a GAF domain. Residues 219–448 (IIGNSKPMQE…LENVMERAVI (230 aa)) form the Sigma-54 factor interaction domain. ATP-binding positions include 247–254 (GESGVGKE) and 310–319 (ADGGTIFLDE). Positions 501-520 (IGEAAKELGLARRMLGVRME) form a DNA-binding region, H-T-H motif.

AnfA is essential for nitrogen fixation under Mo- and V-deficient conditions. It is required for the regulation of nitrogenase 3 transcription. Interacts with sigma-54. The sequence is that of Nitrogen fixation protein AnfA (anfA) from Azotobacter vinelandii.